The sequence spans 352 residues: Type II restriction enzyme HaeII (352 aa).

The catalysed reaction is Endonucleolytic cleavage of DNA to give specific double-stranded fragments with terminal 5'-phosphates.. In terms of biological role, a P subtype restriction enzyme that recognizes the double-stranded sequence 5'-RGCGCY-3' and cleaves after C-5. The polypeptide is Type II restriction enzyme HaeII (haeIIR) (Haemophilus aegyptius).